Consider the following 282-residue polypeptide: Phosphatidylserine decarboxylase proenzyme (282 aa).

Residues aspartate 88, histidine 144, and serine 247 each act as charge relay system; for autoendoproteolytic cleavage activity in the active site. Serine 247 acts as the Schiff-base intermediate with substrate; via pyruvic acid; for decarboxylase activity in catalysis. Serine 247 is modified (pyruvic acid (Ser); by autocatalysis).

The protein belongs to the phosphatidylserine decarboxylase family. PSD-B subfamily. Prokaryotic type I sub-subfamily. In terms of assembly, heterodimer of a large membrane-associated beta subunit and a small pyruvoyl-containing alpha subunit. Pyruvate is required as a cofactor. In terms of processing, is synthesized initially as an inactive proenzyme. Formation of the active enzyme involves a self-maturation process in which the active site pyruvoyl group is generated from an internal serine residue via an autocatalytic post-translational modification. Two non-identical subunits are generated from the proenzyme in this reaction, and the pyruvate is formed at the N-terminus of the alpha chain, which is derived from the carboxyl end of the proenzyme. The autoendoproteolytic cleavage occurs by a canonical serine protease mechanism, in which the side chain hydroxyl group of the serine supplies its oxygen atom to form the C-terminus of the beta chain, while the remainder of the serine residue undergoes an oxidative deamination to produce ammonia and the pyruvoyl prosthetic group on the alpha chain. During this reaction, the Ser that is part of the protease active site of the proenzyme becomes the pyruvoyl prosthetic group, which constitutes an essential element of the active site of the mature decarboxylase.

The protein localises to the cell membrane. It carries out the reaction a 1,2-diacyl-sn-glycero-3-phospho-L-serine + H(+) = a 1,2-diacyl-sn-glycero-3-phosphoethanolamine + CO2. Its pathway is phospholipid metabolism; phosphatidylethanolamine biosynthesis; phosphatidylethanolamine from CDP-diacylglycerol: step 2/2. Its function is as follows. Catalyzes the formation of phosphatidylethanolamine (PtdEtn) from phosphatidylserine (PtdSer). This is Phosphatidylserine decarboxylase proenzyme from Xanthomonas campestris pv. campestris (strain B100).